The chain runs to 538 residues: Probable bifunctional tRNA threonylcarbamoyladenosine biosynthesis protein (538 aa).

The interval Met1–Trp327 is kae1. Fe cation is bound by residues His111, His115, and Tyr132. L-threonylcarbamoyladenylate is bound by residues Tyr132–Gly136, Asp164, Gly177, Glu181, and Asn260. Fe cation is bound at residue Asp288. The Protein kinase domain maps to Lys336–His538. Residues Ile342–Ile350 and Lys363 contribute to the ATP site. Asp452 (proton acceptor; for kinase activity) is an active-site residue.

The protein in the N-terminal section; belongs to the KAE1 / TsaD family. This sequence in the C-terminal section; belongs to the protein kinase superfamily. Tyr protein kinase family. BUD32 subfamily. As to quaternary structure, component of the KEOPS complex that consists of Kae1, Bud32, Cgi121 and Pcc1; the whole complex dimerizes. It depends on Fe(2+) as a cofactor.

It is found in the cytoplasm. The catalysed reaction is L-seryl-[protein] + ATP = O-phospho-L-seryl-[protein] + ADP + H(+). It carries out the reaction L-threonyl-[protein] + ATP = O-phospho-L-threonyl-[protein] + ADP + H(+). It catalyses the reaction L-threonylcarbamoyladenylate + adenosine(37) in tRNA = N(6)-L-threonylcarbamoyladenosine(37) in tRNA + AMP + H(+). Its function is as follows. Required for the formation of a threonylcarbamoyl group on adenosine at position 37 (t(6)A37) in tRNAs that read codons beginning with adenine. Is a component of the KEOPS complex that is probably involved in the transfer of the threonylcarbamoyl moiety of threonylcarbamoyl-AMP (TC-AMP) to the N6 group of A37. The Kae1 domain likely plays a direct catalytic role in this reaction. The Bud32 domain probably displays kinase activity that regulates Kae1 function. The protein is Probable bifunctional tRNA threonylcarbamoyladenosine biosynthesis protein of Methanobrevibacter smithii (strain ATCC 35061 / DSM 861 / OCM 144 / PS).